The chain runs to 163 residues: MSNPKNKKEKTFLGIDYGQRRIGLAYAASPLFISLPIGCIEAGNTVEATAKILFNIIQERSVSCVVLGNPIPMQKGQKSALQEEITKLSSLIQESCGVEVILWDERLSSAQAERMLKGDCGLSRKKRKGKTDTIAATLILTSFLESSPPKIFLKKTCPKPPVR.

It belongs to the YqgF nuclease family.

Its subcellular location is the cytoplasm. Functionally, could be a nuclease involved in processing of the 5'-end of pre-16S rRNA. This is Putative pre-16S rRNA nuclease from Chlamydia caviae (strain ATCC VR-813 / DSM 19441 / 03DC25 / GPIC) (Chlamydophila caviae).